A 368-amino-acid chain; its full sequence is Transcription factor TGA1 (368 aa).

Residues 53-65 (LDNNVSEDTSHGT) show a composition bias toward polar residues. The segment at 53–83 (LDNNVSEDTSHGTAGTPHMFDQEASTSRHPD) is disordered. One can recognise a bZIP domain in the interval 82–145 (PDKIQRRLAQ…NGIDTNSLGF (64 aa)). Coiled-coil stretches lie at residues 83–131 (DKIQ…RQQG) and 261–281 (NLKQ…EKLQ). Residues 84–104 (KIQRRLAQNREAARKSRLRKK) are basic motif. The tract at residues 110–124 (LETSRLKLIQLEQEL) is leucine-zipper. One can recognise a DOG1 domain in the interval 153–363 (IAAFEMEYGH…RALSSSWATR (211 aa)). A disulfide bond links C260 and C266.

The protein belongs to the bZIP family. As to quaternary structure, binds DNA as a dimer. The reduced form interacts with NPR1. As to expression, predominantly expressed in roots.

The protein localises to the nucleus. Its function is as follows. Transcriptional activator that binds specifically to the DNA sequence 5'-TGACG-3'. Recognizes ocs elements like the as-1 motif of the cauliflower mosaic virus 35S promoter. Binding to the as-1-like cis elements mediate auxin- and salicylic acid-inducible transcription. May be involved in the induction of the systemic acquired resistance (SAR) via its interaction with NPR1. Could also bind to the Hex-motif (5'-TGACGTGG-3') another cis-acting element found in plant histone promoters. This chain is Transcription factor TGA1 (TGA1), found in Arabidopsis thaliana (Mouse-ear cress).